We begin with the raw amino-acid sequence, 134 residues long: Estradiol 17-beta-dehydrogenase 8 (134 aa).

Ser38 lines the substrate pocket. Lys42 is subject to N6-succinyllysine. Tyr51 acts as the Proton acceptor in catalysis. Residues 51–55 (YAASK) and 84–86 (IAT) contribute to the NAD(+) site. Position 55 is an N6-succinyllysine (Lys55).

Belongs to the short-chain dehydrogenases/reductases (SDR) family. Heterotetramer with CBR4; contains two molecules of HSD17B8 and CBR4.

It is found in the mitochondrion matrix. It carries out the reaction 17beta-estradiol + NAD(+) = estrone + NADH + H(+). The catalysed reaction is 17beta-estradiol + NADP(+) = estrone + NADPH + H(+). It catalyses the reaction testosterone + NAD(+) = androst-4-ene-3,17-dione + NADH + H(+). Its pathway is steroid biosynthesis; estrogen biosynthesis. The protein operates within lipid metabolism; fatty acid biosynthesis. Functionally, NAD-dependent 17-beta-hydroxysteroid dehydrogenase with highest activity towards estradiol. Has very low activity towards testosterone. The heterotetramer with CBR4 has NADH-dependent 3-ketoacyl-acyl carrier protein reductase activity, and thereby plays a role in mitochondrial fatty acid biosynthesis. Within the heterotetramer, HSD17B8 binds NADH; CBR4 binds NADPD. In Callithrix jacchus (White-tufted-ear marmoset), this protein is Estradiol 17-beta-dehydrogenase 8 (HSD17B8).